Here is an 806-residue protein sequence, read N- to C-terminus: MAAVTELDDQEMREAQREYLDFLDDEEDQGIYQSKVRDMISENQYRLIVNINDLRRKNEKRASLLMNNAFEGLIAFQRALKDFVASIDGTYAKQYEDFYIGLEGSFGSKHVTPRTLTSRFLSSVVCVEGIVTKCSLVRPKVVRSVHYCPATKKTIERKYTDLTSLEAFPSSAVYPTKDEENNPLETEYGLSIYKDHQTITIQEMPEKAPAGQLPRSVDIILDDDLVDKVKPGDRVQVIGTYRCLPSKQNGYTSASFRTILIACNVIQMSKEVTPVFSADDLAKIKKFSKSHSKDVFEQLSRSLAPSIHGHSYIKKAILCMLLGGVEKVLDNGTRIRGDINVLLIGDPSVAKSQLLRYVLFTAPRAIPTTGRGSSGVGLTAAVTTDQETGERRLEAGAMVLADRGVVCIDEFDKMSDMDRTAIHEVMEQGRVTIAKAGIHARLNARCSVLAAANPVYGRYDQYKTPMENIGLQDSLLSRFDLLFIMLDQMDPEHDREISDHVLRMHRYRSAGEQDGDALPLGSAVDILATEDPNVTSEEQQELQVYEKHDSLLHGVKKRREKVLSMEFMRKYIHVAKIFKPVLTQEAASFIAEEYTRLRNQDQMSTDVARTSPVTARSLETLIRLSTAHAKVRMSKTVQLQDAEAALELVQYAYFKKVLEKEKKRRRREGESDTEEEQTQPDGEGKKRRKKRRAQDGESHDPYEFSDTEDETPVVHTPKTPVNGQEEMETDSSAKPGLSGDRLKAFKSALLDAFKAAHAQSIAMAAMMEAINKNNDSPFSQAEVKAALELMEEANHIMVSDNIVFLI.

The MCM domain maps to 295-502 (VFEQLSRSLA…HDREISDHVL (208 aa)). 345–352 (GDPSVAKS) contributes to the ATP binding site. The Arginine finger signature appears at 477–480 (SRFD). The interval 662–738 (KKRRRREGES…TDSSAKPGLS (77 aa)) is disordered. Residues 693-702 (AQDGESHDPY) are compositionally biased toward basic and acidic residues.

The protein belongs to the MCM family. As to quaternary structure, component of the mcm2-7 complex (RLF-M). The complex forms a toroidal hexameric ring with the proposed subunit order mcm2-mcm6-mcm4-mcm7-mcm3-mcm5. Begins to associate with zmcm6 into mcm complexes at the neurula stage. Component of the CMG helicase complex, composed of the mcm2-7 complex, the GINS complex and cdc45.

Its subcellular location is the nucleus. The protein resides in the chromosome. The catalysed reaction is ATP + H2O = ADP + phosphate + H(+). Acts as a component of the mcm2-7 complex (mcm complex) which is the putative replicative helicase essential for 'once per cell cycle' DNA replication initiation and elongation in eukaryotic cells. The active ATPase sites in the mcm2-7 ring are formed through the interaction surfaces of two neighboring subunits such that a critical structure of a conserved arginine finger motif is provided in trans relative to the ATP-binding site of the Walker A box of the adjacent subunit. The six ATPase active sites, however, are likely to contribute differentially to the complex helicase activity. The existence of maternal and zygotic forms of mcm3 and mcm6 suggests that specific forms of mcm2-7 complexes may be used during different stages of development. In Xenopus laevis (African clawed frog), this protein is Zygotic DNA replication licensing factor mcm3.